Here is a 1159-residue protein sequence, read N- to C-terminus: DNA-directed RNA polymerase subunit beta (1159 aa).

The protein belongs to the RNA polymerase beta chain family. In terms of assembly, the RNAP catalytic core consists of 2 alpha, 1 beta, 1 beta' and 1 omega subunit. When a sigma factor is associated with the core the holoenzyme is formed, which can initiate transcription.

The enzyme catalyses RNA(n) + a ribonucleoside 5'-triphosphate = RNA(n+1) + diphosphate. Functionally, DNA-dependent RNA polymerase catalyzes the transcription of DNA into RNA using the four ribonucleoside triphosphates as substrates. The sequence is that of DNA-directed RNA polymerase subunit beta from Deinococcus radiodurans (strain ATCC 13939 / DSM 20539 / JCM 16871 / CCUG 27074 / LMG 4051 / NBRC 15346 / NCIMB 9279 / VKM B-1422 / R1).